Consider the following 293-residue polypeptide: Probable 2-(5''-triphosphoribosyl)-3'-dephosphocoenzyme-A synthase (293 aa).

The protein belongs to the CitG/MdcB family.

It catalyses the reaction 3'-dephospho-CoA + ATP = 2'-(5''-triphospho-alpha-D-ribosyl)-3'-dephospho-CoA + adenine. In terms of biological role, involved in the formation of 2-(5''-phosphoribosyl)-3'-dephosphocoenzyme-A, the prosthetic group of the acyl-carrier protein of the malonate decarboxylase. This chain is Probable 2-(5''-triphosphoribosyl)-3'-dephosphocoenzyme-A synthase, found in Pseudomonas aeruginosa (strain ATCC 15692 / DSM 22644 / CIP 104116 / JCM 14847 / LMG 12228 / 1C / PRS 101 / PAO1).